The following is a 947-amino-acid chain: MTPLSSPLSQYWQTVVERLPEGFTETSLSAQAKSVLTFSDFALDSVIAHPEWLAELESASPQADEWRHYAGWLQEALAGVCDDASLMRELRFFRRRIMVRIAWAQTLSLVDDETILQQLSHLAETLIVGARDWLYAACCREWGTPCNPQGVPQPLLILGMGKLGGGELNFSSDIDLIFAWPEHGETRGGRRELDNAQFFTRLGQRLIKALDQPTMDGFVYRVDMRLRPFGDSGPLVLSFAALEDYYQEQGRDWERYAMVKARLMGDNDDAWSRELRAMLRPFVFRRYIDFSVIQSLRNMKGMIAREVRRRGLKDNIKLGAGGIREIEFIVQVFQLIRGGREPSLQSRSLLPTLDAIAALHLLPENDVAQLRVAYLFLRRLENLLQSINDEQTQTLPADDLNRARLAWGMKAENWPQLVGELTDHMANVRRVFNELIGDDEADTPQEEERSEPWREVWQDALQEDDSTPVLAHLADEDRRQVLTLIADFRKELDKRPIGPRGRQVLDQLMPHLLADVCSREDAAVTLSRITPLLAGIVTRTTYLELLSEFPGALKHLIMLCAASPMIASQLARYPLLLDELLDPGTLYQPTATDAYRDELRQYLLRVPEEDEEQQLEALRQFKQAQLLRIAAADIAGTLPVMKVSDHLTWLAEAMIDAVVQQAWTQMVARYGQPAHLDERQGRGFAVVGYGKLGGWELGYSSDLDLIFLHDCPMDVMTNGEREIDGRQFYLRLAQRIMHLFSTRTSSGILYEVDARLRPSGAAGMLVTSADAFADYQQHEAWTWEHQALVRARVVYGDPQLTSQFDTVRRTIMTTARDGKTLQTEVREMREKMRAHLGNKHRDRFDIKADEGGITDIEFIAQYLVLRYAHEKPKLTRWSDNVRILELLAQNGIMDEHEAQALTVAYTTLRDELHHLALQELPGHVAQTCFSKERALVQASWRKWLVAV.

An adenylyl removase region spans residues 1-440 (MTPLSSPLSQ…VFNELIGDDE (440 aa)). The interval 450–947 (SEPWREVWQD…ASWRKWLVAV (498 aa)) is adenylyl transferase.

This sequence belongs to the GlnE family. The cofactor is Mg(2+).

It catalyses the reaction [glutamine synthetase]-O(4)-(5'-adenylyl)-L-tyrosine + phosphate = [glutamine synthetase]-L-tyrosine + ADP. The catalysed reaction is [glutamine synthetase]-L-tyrosine + ATP = [glutamine synthetase]-O(4)-(5'-adenylyl)-L-tyrosine + diphosphate. In terms of biological role, involved in the regulation of glutamine synthetase GlnA, a key enzyme in the process to assimilate ammonia. When cellular nitrogen levels are high, the C-terminal adenylyl transferase (AT) inactivates GlnA by covalent transfer of an adenylyl group from ATP to specific tyrosine residue of GlnA, thus reducing its activity. Conversely, when nitrogen levels are low, the N-terminal adenylyl removase (AR) activates GlnA by removing the adenylyl group by phosphorolysis, increasing its activity. The regulatory region of GlnE binds the signal transduction protein PII (GlnB) which indicates the nitrogen status of the cell. The protein is Bifunctional glutamine synthetase adenylyltransferase/adenylyl-removing enzyme of Salmonella paratyphi B (strain ATCC BAA-1250 / SPB7).